We begin with the raw amino-acid sequence, 75 residues long: UPF0154 protein MYPE400 (75 aa).

A helical transmembrane segment spans residues 5–27; it reads IGLCLGLGIPISLIIGAVIGYYF.

This sequence belongs to the UPF0154 family.

It is found in the membrane. The chain is UPF0154 protein MYPE400 from Malacoplasma penetrans (strain HF-2) (Mycoplasma penetrans).